Consider the following 470-residue polypeptide: Membrane-bound lytic murein transglycosylase F (470 aa).

The first 21 residues, 1–21 (MLKEKLIIIITLVMLLCACDI), serve as a signal peptide directing secretion. The interval 22 to 259 (QEQSTQLAQI…VLEEKYFGHV (238 aa)) is non-LT domain. The interval 260-470 (RQFNYVNTLA…PKIGDEVEAK (211 aa)) is LT domain. Glu304 is an active-site residue.

This sequence in the N-terminal section; belongs to the bacterial solute-binding protein 3 family. In the C-terminal section; belongs to the transglycosylase Slt family.

Its subcellular location is the cell outer membrane. The catalysed reaction is Exolytic cleavage of the (1-&gt;4)-beta-glycosidic linkage between N-acetylmuramic acid (MurNAc) and N-acetylglucosamine (GlcNAc) residues in peptidoglycan, from either the reducing or the non-reducing ends of the peptidoglycan chains, with concomitant formation of a 1,6-anhydrobond in the MurNAc residue.. Its function is as follows. Murein-degrading enzyme that degrades murein glycan strands and insoluble, high-molecular weight murein sacculi, with the concomitant formation of a 1,6-anhydromuramoyl product. Lytic transglycosylases (LTs) play an integral role in the metabolism of the peptidoglycan (PG) sacculus. Their lytic action creates space within the PG sacculus to allow for its expansion as well as for the insertion of various structures such as secretion systems and flagella. The sequence is that of Membrane-bound lytic murein transglycosylase F from Pseudoalteromonas translucida (strain TAC 125).